A 117-amino-acid polypeptide reads, in one-letter code: Transcription elongation factor SPT4 (117 aa).

An interaction with SUPT5H region spans residues 1 to 40 (MSLETVPKDLRHLRACLLCSLVKTIDQFEYDGCDNCESYL). The segment at 16–36 (CLLCSLVKTIDQFEYDGCDNC) adopts a C4-type zinc-finger fold.

The protein belongs to the SPT4 family. As to quaternary structure, interacts with SUPT5H to form the DSIF complex. DSIF interacts with RNA polymerase II and with the positive transcription elongation factor b complex (P-TEFb complex), which is composed of CDK9 and cyclin-T.

The protein resides in the nucleus. In terms of biological role, may function as a component of the DRB sensitivity-inducing factor complex (DSIF complex), which regulates transcription elongation by RNA polymerase II. Probably enhances transcriptional pausing at sites proximal to the promoter, which may facilitate the assembly of an elongation competent RNA polymerase II complex. Also acts to stimulate transcriptional elongation at low nucleotide concentrations. Regulation of transcriptional elongation by this protein is required for the expression of genes which control neuronal development. This is Transcription elongation factor SPT4 (supt4h1) from Danio rerio (Zebrafish).